Reading from the N-terminus, the 240-residue chain is Protein CDV3 homolog A (240 aa).

Over residues 1 to 15 the composition is skewed to basic and acidic residues; sequence MAEPQEKSLDDFFAK. A disordered region spans residues 1-204; sequence MAEPQEKSLD…TESRREKEME (204 aa). The residue at position 2 (Ala2) is an N-acetylalanine. Residues 27–52 show a composition bias toward low complexity; it reads SGSAAGSRGSARPPDGAPSSSSSMSG. Positions 57-73 are enriched in basic and acidic residues; the sequence is VKKEKSGKSDNPDQLQE. 2 stretches are compositionally biased toward polar residues: residues 127–141 and 181–192; these read DKSS…QAQA and SDTQFPSLQATA. Basic and acidic residues predominate over residues 193 to 204; it reads KHTESRREKEME.

It belongs to the CDV3 family.

The protein resides in the cytoplasm. The protein is Protein CDV3 homolog A (cdv3-a) of Xenopus laevis (African clawed frog).